The following is a 332-amino-acid chain: L-lactate dehydrogenase A chain (332 aa).

Residues 29–57 and R99 each bind NAD(+); that span reads GAVG…VEDK. Residues R106, N138, and R169 each coordinate substrate. N138 contributes to the NAD(+) binding site. The active-site Proton acceptor is the H193. Residue T248 participates in substrate binding.

This sequence belongs to the LDH/MDH superfamily. LDH family. Homotetramer.

It is found in the cytoplasm. The enzyme catalyses (S)-lactate + NAD(+) = pyruvate + NADH + H(+). It participates in fermentation; pyruvate fermentation to lactate; (S)-lactate from pyruvate: step 1/1. Its function is as follows. Interconverts simultaneously and stereospecifically pyruvate and lactate with concomitant interconversion of NADH and NAD(+). The protein is L-lactate dehydrogenase A chain (LDHA) of Gallus gallus (Chicken).